We begin with the raw amino-acid sequence, 136 residues long: Large ribosomal subunit protein bL20 (136 aa).

This sequence belongs to the bacterial ribosomal protein bL20 family.

Its function is as follows. Binds directly to 23S ribosomal RNA and is necessary for the in vitro assembly process of the 50S ribosomal subunit. It is not involved in the protein synthesizing functions of that subunit. This Tropheryma whipplei (strain Twist) (Whipple's bacillus) protein is Large ribosomal subunit protein bL20.